A 198-amino-acid polypeptide reads, in one-letter code: MRLLLASSSPRRRELLTLLHRPFDCEVPEVEELRGANENAGDYVTRLAEEKAQTVAQRQQTPCLVIGSDTLISFKGQVLEKPESYEHFSQMMKQLSGQTHQVLTSVSVCQWNGHKVVARETALVTTQVEFAALSQGEIDAYWATGEPHDKAAGYGIQGYGGKFVKRIEGSYFAVVGLPLYETEQLLRMFEMTGEVDER.

D69 functions as the Proton acceptor in the catalytic mechanism.

Belongs to the Maf family. YhdE subfamily. The cofactor is a divalent metal cation.

Its subcellular location is the cytoplasm. It carries out the reaction dTTP + H2O = dTMP + diphosphate + H(+). It catalyses the reaction UTP + H2O = UMP + diphosphate + H(+). Functionally, nucleoside triphosphate pyrophosphatase that hydrolyzes dTTP and UTP. May have a dual role in cell division arrest and in preventing the incorporation of modified nucleotides into cellular nucleic acids. In Idiomarina loihiensis (strain ATCC BAA-735 / DSM 15497 / L2-TR), this protein is dTTP/UTP pyrophosphatase.